A 67-amino-acid polypeptide reads, in one-letter code: Large ribosomal subunit protein bL35 (67 aa).

The interval 1-20 (MPKLKTKSGAKKRFVPKKSG) is disordered.

Belongs to the bacterial ribosomal protein bL35 family.

This is Large ribosomal subunit protein bL35 from Anaeromyxobacter dehalogenans (strain 2CP-1 / ATCC BAA-258).